The primary structure comprises 493 residues: Putative trans-acting regulator SP_1800 (493 aa).

This sequence belongs to the AtxA/AcpA family.

The polypeptide is Putative trans-acting regulator SP_1800 (Streptococcus pneumoniae serotype 4 (strain ATCC BAA-334 / TIGR4)).